A 477-amino-acid chain; its full sequence is Aspartyl/glutamyl-tRNA(Asn/Gln) amidotransferase subunit B (477 aa).

The protein belongs to the GatB/GatE family. GatB subfamily. Heterotrimer of A, B and C subunits.

The enzyme catalyses L-glutamyl-tRNA(Gln) + L-glutamine + ATP + H2O = L-glutaminyl-tRNA(Gln) + L-glutamate + ADP + phosphate + H(+). It carries out the reaction L-aspartyl-tRNA(Asn) + L-glutamine + ATP + H2O = L-asparaginyl-tRNA(Asn) + L-glutamate + ADP + phosphate + 2 H(+). Functionally, allows the formation of correctly charged Asn-tRNA(Asn) or Gln-tRNA(Gln) through the transamidation of misacylated Asp-tRNA(Asn) or Glu-tRNA(Gln) in organisms which lack either or both of asparaginyl-tRNA or glutaminyl-tRNA synthetases. The reaction takes place in the presence of glutamine and ATP through an activated phospho-Asp-tRNA(Asn) or phospho-Glu-tRNA(Gln). This chain is Aspartyl/glutamyl-tRNA(Asn/Gln) amidotransferase subunit B, found in Ureaplasma parvum serovar 3 (strain ATCC 27815 / 27 / NCTC 11736).